The following is a 160-amino-acid chain: Transcription elongation factor GreB (160 aa).

Belongs to the GreA/GreB family. GreB subfamily.

Its function is as follows. Necessary for efficient RNA polymerase transcription elongation past template-encoded arresting sites. The arresting sites in DNA have the property of trapping a certain fraction of elongating RNA polymerases that pass through, resulting in locked ternary complexes. Cleavage of the nascent transcript by cleavage factors such as GreA or GreB allows the resumption of elongation from the new 3'terminus. GreB releases sequences of up to 9 nucleotides in length. In Vibrio vulnificus (strain YJ016), this protein is Transcription elongation factor GreB.